The chain runs to 469 residues: DNA (cytosine-5-)-methyltransferase M.ApeKI (469 aa).

In terms of domain architecture, SAM-dependent MTase C5-type spans 4–469 (YSTISLFSGA…EALAEVLDAV (466 aa)). Residue C93 is part of the active site.

The protein belongs to the class I-like SAM-binding methyltransferase superfamily. C5-methyltransferase family.

It carries out the reaction a 2'-deoxycytidine in DNA + S-adenosyl-L-methionine = a 5-methyl-2'-deoxycytidine in DNA + S-adenosyl-L-homocysteine + H(+). Functionally, cytosine methylase that recognizes the double-stranded sequence 5'-GC(A/T)GC-3', methylates C-5 position of the second cytosine on both strands, and protects the DNA from cleavage by the ApeKI endonuclease. The sequence is that of DNA (cytosine-5-)-methyltransferase M.ApeKI from Aeropyrum pernix (strain ATCC 700893 / DSM 11879 / JCM 9820 / NBRC 100138 / K1).